Consider the following 122-residue polypeptide: Large ribosomal subunit protein uL14 (122 aa).

Belongs to the universal ribosomal protein uL14 family. As to quaternary structure, part of the 50S ribosomal subunit. Forms a cluster with proteins L3 and L19. In the 70S ribosome, L14 and L19 interact and together make contacts with the 16S rRNA in bridges B5 and B8.

Its function is as follows. Binds to 23S rRNA. Forms part of two intersubunit bridges in the 70S ribosome. The chain is Large ribosomal subunit protein uL14 from Chlorobium luteolum (strain DSM 273 / BCRC 81028 / 2530) (Pelodictyon luteolum).